The following is a 252-amino-acid chain: Probable anguibactin biosynthesis thioesterase AngT (252 aa).

Residues serine 92 and histidine 229 contribute to the active site.

This sequence belongs to the thioesterase family.

It participates in siderophore biosynthesis; anguibactin biosynthesis. Its function is as follows. Probable thioesterase. Involved in anguibactin production, but is not essential for virulence or iron transport gene expression. The polypeptide is Probable anguibactin biosynthesis thioesterase AngT (angT) (Vibrio anguillarum (strain ATCC 68554 / 775) (Listonella anguillarum)).